A 1089-amino-acid chain; its full sequence is Translocase of chloroplast 120, chloroplastic (1089 aa).

Glycine 2 is modified (N-acetylglycine). 3 disordered regions span residues 158-179, 255-339, and 353-381; these read ATEDVNLENGNTHSSSENGVVS, TLSP…GLGR, and QPRVNGNVSHNQPQQAEDSTTAETDEHDE. A compositionally biased stretch (polar residues) spans 165-176; the sequence is ENGNTHSSSENG. Phosphoserine occurs at positions 179, 263, and 283. Positions 300-312 are enriched in basic and acidic residues; that stretch reads EIKESQHMERESE. Residues 327-339 show a composition bias toward low complexity; that stretch reads AALPPARPAGLGR. Positions 353 to 374 are enriched in polar residues; the sequence is QPRVNGNVSHNQPQQAEDSTTA. The 230-residue stretch at 454-683 folds into the AIG1-type G domain; the sequence is DFSCTIMVLG…KLQDNIPGGQ (230 aa). The G1 stretch occupies residues 463 to 470; the sequence is GKSGVGKS. GTP contacts are provided by residues 466–471 and 485–490; these read GVGKSA and DAFQVG. Serine 470 serves as a coordination point for Mg(2+). The tract at residues 485 to 488 is homodimerization; it reads DAFQ. The G2 stretch occupies residues 489–493; sequence VGTKK. A G3 region spans residues 510–513; sequence DTPG. Positions 548-553 are homodimerization; that stretch reads RLDMQS. The tract at residues 582–585 is G4; sequence THAA. GTP is bound by residues histidine 583 and 631–632; that span reads EN. Residues 631-633 form a G5 region; the sequence is ENH. Positions 710 to 748 are disordered; it reads PEQQYDDEDDEDDLDESSDSEEESEYDELPPFKRLTKAE. Residues 713–737 are compositionally biased toward acidic residues; that stretch reads QYDDEDDEDDLDESSDSEEESEYDE. Residues 767–788 adopt a coiled-coil conformation; sequence REKLFMKRQMKEERKRRKLLKK. The chain crosses the membrane as a helical span at residues 1064 to 1080; the sequence is LAVVALVPLFKKLLTYY.

It belongs to the TRAFAC class TrmE-Era-EngA-EngB-Septin-like GTPase superfamily. AIG1/Toc34/Toc159-like paraseptin GTPase family. TOC159 subfamily. As to quaternary structure, homodimer. Part of the TOC core complex that includes 1 protein for the specific recognition of transit peptides surrounded by a ring composed of four proteins forming translocation channels, and four to five GTP-binding proteins providing energy. This core complex can interact with components of the TIC complex to form a larger import complex. Chloroplastic protein precursor such as prSS (precursor of the RuBisCO small subunit) interacts with these complexes. The TOC complex contains a specific subset of polar lipids such as digalactosyldiacylglyceride (DGDG), phosphatidylcholine (PC) and phosphatidylglycerol (PG). The cofactor is Mg(2+). In terms of processing, phosphorylated by KOC1. Expressed in seedlings, flowers, and roots.

The protein resides in the plastid. The protein localises to the chloroplast outer membrane. It localises to the cytoplasm. GTPase involved in protein precursor import into chloroplasts. Seems to recognize chloroplast-destined precursor proteins and regulate their presentation to the translocation channel through GTP hydrolysis. Probably specialized in the import of nuclear encoded non-photosynthetic preproteins from the cytoplasm to the chloroplast. In Arabidopsis thaliana (Mouse-ear cress), this protein is Translocase of chloroplast 120, chloroplastic.